The following is a 175-amino-acid chain: MVSLKDSHFDLFHLPARFALDEPTLDAAYRAVQSQVHPDRFAAAGDAQKRIAMQWATRANEAYQTLRDPLKRATYLLHLRGVDVGAENNTAMEPAFLMQQMEWRERIEDAAGAKNVDALDALLAELRDERRARLAKLGALLDSGSDQGAAEAVRQLMFVERVSAEIGAQIERLEH.

One can recognise a J domain in the interval 7–79 (SHFDLFHLPA…LKRATYLLHL (73 aa)).

The protein belongs to the HscB family. As to quaternary structure, interacts with HscA and stimulates its ATPase activity.

In terms of biological role, co-chaperone involved in the maturation of iron-sulfur cluster-containing proteins. Seems to help targeting proteins to be folded toward HscA. The polypeptide is Co-chaperone protein HscB homolog (Burkholderia mallei (strain ATCC 23344)).